The sequence spans 136 residues: Ig heavy chain V region BCL1 (136 aa).

A signal peptide spans 1 to 19 (MGWSCIIFFLVATATGVHS). Residues 20 to 135 (QVQLQQSGPE…WGQGTTLTVS (116 aa)) form the Ig-like domain.

This Mus musculus (Mouse) protein is Ig heavy chain V region BCL1.